Reading from the N-terminus, the 515-residue chain is G-protein coupled receptor 176 (515 aa).

Polar residues predominate over residues 1 to 16; it reads MGHNGSWISPNASEPH. Positions 1-20 are disordered; it reads MGHNGSWISPNASEPHNASG. Over 1–42 the chain is Extracellular; the sequence is MGHNGSWISPNASEPHNASGAEAAGVNRSALGEFGEAQLYRQ. N-linked (GlcNAc...) asparagine glycosylation is found at Asn4, Asn11, Asn17, and Asn27. The helical transmembrane segment at 43 to 63 threads the bilayer; it reads FTTTVQVVIFIGSLLGNFMVL. Topologically, residues 64 to 82 are cytoplasmic; the sequence is WSTCRTTVFKSVTNRFIKN. A helical membrane pass occupies residues 83–103; it reads LACSGICASLVCVPFDIILST. Topologically, residues 104-118 are extracellular; that stretch reads SPHCCWWIYTMLFCK. Residues 119-139 form a helical membrane-spanning segment; that stretch reads VVKFLHKVFCSVTILSFPAIA. The Cytoplasmic segment spans residues 140–160; that stretch reads LDRYYSVLYPLERKISDAKSR. The chain crosses the membrane as a helical span at residues 161–181; the sequence is ELVMYIWAHAVVASVPVFAVT. Residues 182–207 are Extracellular-facing; it reads NVADIYATSTCTEVWSNSLGHLVYVL. The helical transmembrane segment at 208–228 threads the bilayer; the sequence is VYNITTVIVPVVVVFLFLILI. Over 229 to 267 the chain is Cytoplasmic; it reads RRALSASQKKKVIIAALRTPQNTISIPYASQREAELHAT. The chain crosses the membrane as a helical span at residues 268-288; the sequence is LLSMVMVFILCSVPYATLVVY. Over 289–299 the chain is Extracellular; sequence QTVLNVPDTSV. Residues 300-320 traverse the membrane as a helical segment; that stretch reads FLLLTAVWLPKVSLLANPVLF. Topologically, residues 321–515 are cytoplasmic; that stretch reads LTVNKSVRKC…KVSIFPKVDS (195 aa).

This sequence belongs to the G-protein coupled receptor 1 family.

The protein resides in the cell membrane. Functionally, orphan receptor involved in normal circadian rhythm behavior. Acts through the G-protein subclass G(z)-alpha and has an agonist-independent basal activity to repress cAMP production. The chain is G-protein coupled receptor 176 (GPR176) from Homo sapiens (Human).